A 108-amino-acid chain; its full sequence is UPF0145 protein LGAS_1099 (108 aa).

This sequence belongs to the UPF0145 family.

The polypeptide is UPF0145 protein LGAS_1099 (Lactobacillus gasseri (strain ATCC 33323 / DSM 20243 / BCRC 14619 / CIP 102991 / JCM 1131 / KCTC 3163 / NCIMB 11718 / NCTC 13722 / AM63)).